Here is a 387-residue protein sequence, read N- to C-terminus: Phosphoglycerate kinase (387 aa).

Substrate-binding positions include 21 to 23, arginine 36, 59 to 62, arginine 113, and arginine 146; these read DLN and HLGR. Residues lysine 197, glutamate 314, and 340-343 contribute to the ATP site; that span reads GGDT.

Belongs to the phosphoglycerate kinase family. Monomer.

Its subcellular location is the cytoplasm. It catalyses the reaction (2R)-3-phosphoglycerate + ATP = (2R)-3-phospho-glyceroyl phosphate + ADP. It participates in carbohydrate degradation; glycolysis; pyruvate from D-glyceraldehyde 3-phosphate: step 2/5. This is Phosphoglycerate kinase from Aeromonas salmonicida (strain A449).